Reading from the N-terminus, the 177-residue chain is Endoribonuclease YbeY (177 aa).

Residues H114, H118, and H124 each coordinate Zn(2+). The disordered stretch occupies residues S154 to E177. A compositionally biased stretch (polar residues) spans Q168–E177.

Belongs to the endoribonuclease YbeY family. It depends on Zn(2+) as a cofactor.

It localises to the cytoplasm. Functionally, single strand-specific metallo-endoribonuclease involved in late-stage 70S ribosome quality control and in maturation of the 3' terminus of the 16S rRNA. This chain is Endoribonuclease YbeY, found in Cellvibrio japonicus (strain Ueda107) (Pseudomonas fluorescens subsp. cellulosa).